Consider the following 220-residue polypeptide: Flavin-dependent thymidylate synthase (220 aa).

One can recognise a ThyX domain in the interval 1–208 (MKIDILDKGF…PWTFEAFLKY (208 aa)). Residues threonine 55, 78–80 (RHR), and glutamate 86 contribute to the FAD site. DUMP contacts are provided by residues 75–78 (QWFR), 86–90 (ELSGR), and arginine 147. The ThyX motif motif lies at 78–88 (RHRIASYNELS). Residues 163–165 (NAR) and asparagine 169 each bind FAD. Residue arginine 174 participates in dUMP binding. Arginine 174 acts as the Involved in ionization of N3 of dUMP, leading to its activation in catalysis.

It belongs to the thymidylate synthase ThyX family. As to quaternary structure, homotetramer. FAD is required as a cofactor.

The catalysed reaction is dUMP + (6R)-5,10-methylene-5,6,7,8-tetrahydrofolate + NADPH + H(+) = dTMP + (6S)-5,6,7,8-tetrahydrofolate + NADP(+). It functions in the pathway pyrimidine metabolism; dTTP biosynthesis. Functionally, catalyzes the reductive methylation of 2'-deoxyuridine-5'-monophosphate (dUMP) to 2'-deoxythymidine-5'-monophosphate (dTMP) while utilizing 5,10-methylenetetrahydrofolate (mTHF) as the methyl donor, and NADPH and FADH(2) as the reductant. In Thermotoga petrophila (strain ATCC BAA-488 / DSM 13995 / JCM 10881 / RKU-1), this protein is Flavin-dependent thymidylate synthase.